A 98-amino-acid polypeptide reads, in one-letter code: Small ribosomal subunit protein bS20 (98 aa).

It belongs to the bacterial ribosomal protein bS20 family.

In terms of biological role, binds directly to 16S ribosomal RNA. The polypeptide is Small ribosomal subunit protein bS20 (Synechococcus elongatus (strain ATCC 33912 / PCC 7942 / FACHB-805) (Anacystis nidulans R2)).